The chain runs to 528 residues: MKEVVYVLLLVLLVSVSDANETKPNIENFLRCLRNRTNPKNPIAEAIYTHENSTFASSYVSYTNNKRCLNPNDTKLIAIVAAKHESHVQATVVCAKSNGIQIRIRSGGHDYEGLSFTSSVPFVILDMHDLRSITIDVFRKQAWVDAGATMGELYTKIAAASKTLAFAGGVCPTLGAGGHISGGGYGNLIRKYGISVDHVVDARIVDVNGNILTGATLGRDLLWAIRGGGGASFGVILSWKINLVDVPKTVTVFKVNKTLEQGVTDVLYKWQLVSSKLPQDLFLRAMPKPVNGVVPSEKTIAVVFYAQFLGSARRLMAIMNKNLPELGLKREDCYEMSWINTTTFWQNYPVGTSTSVLLDRPSGPAGAFYKSKSDYVKKPIPKEEMEKIWKAMLKFNNMWMQWNPYGGVMDKIPADATAFPHRKGNLFKIQYFALWTDANATYANLGLMRDIYHEMEPYVSSNPREAFLNYRDIDVGSNPSGETNLEEAKIYGSKYFLGNFKRLMEVKAKYDPENFFRFEQSIPPASAM.

The first 19 residues, Met1–Ala19, serve as a signal peptide directing secretion. Asn20, Asn35, Asn52, and Asn72 each carry an N-linked (GlcNAc...) asparagine glycan. The cysteines at positions 32 and 94 are disulfide-linked. In terms of domain architecture, FAD-binding PCMH-type spans Leu69–Val246. The 6-(S-cysteinyl)-8alpha-(pros-histidyl)-FAD (His-Cys) cross-link spans His109–Cys171. N-linked (GlcNAc...) asparagine glycans are attached at residues Asn256, Asn340, and Asn439.

This sequence belongs to the oxygen-dependent FAD-linked oxidoreductase family. FAD serves as cofactor. Post-translationally, the FAD cofactor is bound via a bicovalent 6-S-cysteinyl, 8alpha-N1-histidyl FAD linkage.

It localises to the secreted. The protein resides in the cell wall. The chain is Berberine bridge enzyme-like 17 from Arabidopsis thaliana (Mouse-ear cress).